An 859-amino-acid chain; its full sequence is Bifunctional levopimaradiene synthase, chloroplastic (859 aa).

Residues 1–52 constitute a chloroplast transit peptide; it reads MALLSSSLSSHIPTGAHHLTLNAYANTQCIPHFFSTLNAGTSAGKRSSLYLR. Mg(2+) is bound by residues Asp-392, Asp-394, Asp-611, Asp-615, Asn-755, and Glu-763. Residues 392–395 carry the DXDD motif motif; sequence DIDD. The DDXXD motif motif lies at 611-615; the sequence is DDLYD.

The protein belongs to the terpene synthase family. Tpsd subfamily. Mg(2+) is required as a cofactor. Requires Mn(2+) as cofactor.

It localises to the plastid. The protein resides in the chloroplast. The catalysed reaction is (+)-copalyl diphosphate = abieta-8(14),12-diene + diphosphate. The enzyme catalyses (+)-copalyl diphosphate = abieta-7,13-diene + diphosphate. It participates in secondary metabolite biosynthesis; terpenoid biosynthesis. It functions in the pathway terpene metabolism; oleoresin biosynthesis. Terpene synthase (di-TPS) involved in the biosynthesis of diterpene natural products included in conifer oleoresin secretions and volatile emissions; these compounds contribute to biotic and abiotic stress defense against herbivores and pathogens. Catalyzes the conversion of (+)-copalyl diphosphate ((+)-CPP) to isopimaradiene. This Picea sitchensis (Sitka spruce) protein is Bifunctional levopimaradiene synthase, chloroplastic.